Reading from the N-terminus, the 310-residue chain is Methionyl-tRNA formyltransferase (310 aa).

A (6S)-5,6,7,8-tetrahydrofolate-binding site is contributed by 111–114 (SLLP).

This sequence belongs to the Fmt family.

It catalyses the reaction L-methionyl-tRNA(fMet) + (6R)-10-formyltetrahydrofolate = N-formyl-L-methionyl-tRNA(fMet) + (6S)-5,6,7,8-tetrahydrofolate + H(+). Attaches a formyl group to the free amino group of methionyl-tRNA(fMet). The formyl group appears to play a dual role in the initiator identity of N-formylmethionyl-tRNA by promoting its recognition by IF2 and preventing the misappropriation of this tRNA by the elongation apparatus. The sequence is that of Methionyl-tRNA formyltransferase from Rhodopseudomonas palustris (strain ATCC BAA-98 / CGA009).